The following is a 23-amino-acid chain: Magainin-B2 (23 aa).

Expressed by the skin glands.

Its subcellular location is the secreted. Functionally, has antimicrobial activity against Gram-negative bacterium E.coli ATCC 25922 (MIC=50 uM) and against fungus C.albicans ATCC 90028 (MIC=100 uM). Has no hemolytic activity against human erythrocytes even at high concentrations. This chain is Magainin-B2, found in Xenopus borealis (Kenyan clawed frog).